The chain runs to 203 residues: Peptidyl-tRNA hydrolase (203 aa).

Residue tyrosine 18 coordinates tRNA. Histidine 23 functions as the Proton acceptor in the catalytic mechanism. Tyrosine 69, asparagine 71, and asparagine 117 together coordinate tRNA.

Belongs to the PTH family. As to quaternary structure, monomer.

The protein resides in the cytoplasm. The catalysed reaction is an N-acyl-L-alpha-aminoacyl-tRNA + H2O = an N-acyl-L-amino acid + a tRNA + H(+). Functionally, hydrolyzes ribosome-free peptidyl-tRNAs (with 1 or more amino acids incorporated), which drop off the ribosome during protein synthesis, or as a result of ribosome stalling. Its function is as follows. Catalyzes the release of premature peptidyl moieties from peptidyl-tRNA molecules trapped in stalled 50S ribosomal subunits, and thus maintains levels of free tRNAs and 50S ribosomes. The protein is Peptidyl-tRNA hydrolase of Parasynechococcus marenigrum (strain WH8102).